Reading from the N-terminus, the 174-residue chain is Large ribosomal subunit protein uL10 (174 aa).

The protein belongs to the universal ribosomal protein uL10 family. In terms of assembly, part of the ribosomal stalk of the 50S ribosomal subunit. The N-terminus interacts with L11 and the large rRNA to form the base of the stalk. The C-terminus forms an elongated spine to which L12 dimers bind in a sequential fashion forming a multimeric L10(L12)X complex.

Its function is as follows. Forms part of the ribosomal stalk, playing a central role in the interaction of the ribosome with GTP-bound translation factors. The protein is Large ribosomal subunit protein uL10 of Anaeromyxobacter sp. (strain K).